Consider the following 307-residue polypeptide: Putative S-adenosyl-L-methionine-dependent methyltransferase MMAR_4570 (307 aa).

S-adenosyl-L-methionine-binding positions include aspartate 128 and 157-158; that span reads DL.

Belongs to the UPF0677 family.

In terms of biological role, exhibits S-adenosyl-L-methionine-dependent methyltransferase activity. In Mycobacterium marinum (strain ATCC BAA-535 / M), this protein is Putative S-adenosyl-L-methionine-dependent methyltransferase MMAR_4570.